The primary structure comprises 942 residues: MNKYEVVKLIGVGGEAKALLVKRINSDKLYVMKQRMFFLLEEANEGLCEAMSLAKIQSPYIVRFEEVFLDNNSNMFSLCIVMEYCEGGDLMDNLFKRISDSFLKNSGLNNNQNNNNNNNNNLNSIVNNNILNNNKNSKQSTTNTNSSGSNSSIASNTTNNNNNNNNINNNNNLKAYENFFSKYVPSETLKGVNQLVEPNCNKDNNKPIEITTTDSPRIIINDNESTNNLNSQSDQILQFSISSESSSFSNNDLINSPNSNDSNLHQSSSNSSICGDYSSPPNLEKISSPGTSTPYQKGSNGNTVNIRCSDIVVEAVSPIKTESIGCQIRSTTSPCTSGPTSPQMIPLNIVEQPPQSTSTSKTDSSPTGADVKKTKMTWWKTYKSSKKDKKQTICSNACESFSNSTFFNDPSSHSQPQHQQLHSSPQQLPQSPRLKPNIESSLNINGNNNNNNCSTLLKLPRKLFYTWIYQICLGVQSIHKNHLVHLDLKSENIFLSESQKIKIGDFGLAKKYENSMSGVAGTYYYLSPEILLNKNYSRPADIFSLGCIFYEMYTLNLLPLTKRSFGQELIEGKFDRKAFKQEFDDSDEPIADLILDMLNLDQNLRPTIDLILQNKLFERISDINSSFNNLLNIVNNTGSSITNSKSNSSNNLNNSNSNNDIINNNNNNNSSNNINNNNIVNLNNSYNNKQDKCEQRNKSLNQNGFLSTSSMGSISSSFNEHEFVRRQLEKNDLDAAADVLCEAFKEEPRFQFVSGATSDNLETKNKSIELGQTIRKSFFTMCVRLMFDNKFMLWGCFDYENKLIAVACWSTPGKSGAPPMTQLIVKILSMLPKFGFRTMKRIGKIMSNIDKAMKNHDSKLDVYYLPYIGVSKEYRDLGVGQYLLKPVIEWAEHQRKTVKAVVFSQKQINFFSKLGLSVGHTEKITNLKGINSIYVMSKNSQY.

One can recognise a Protein kinase domain in the interval 4–617; sequence YEVVKLIGVG…IDLILQNKLF (614 aa). ATP contacts are provided by residues 10-18 and K33; that span reads IGVGGEAKA. Disordered regions lie at residues 109-170, 247-303, 352-371, and 408-445; these read NNNQ…INNN, SFSN…NGNT, QPPQSTSTSKTDSSPTGADV, and NDPSSHSQPQHQQLHSSPQQLPQSPRLKPNIESSLNIN. The segment covering 258 to 272 has biased composition (low complexity); the sequence is NSNDSNLHQSSSNSS. Polar residues predominate over residues 288-303; it reads SPGTSTPYQKGSNGNT. Composition is skewed to low complexity over residues 353-367 and 410-432; these read PPQSTSTSKTDSSPT and PSSHSQPQHQQLHSSPQQLPQSP. D487 serves as the catalytic Proton acceptor. The disordered stretch occupies residues 642–686; that stretch reads TNSKSNSSNNLNNSNSNNDIINNNNNNNSSNNINNNNIVNLNNSY. Residues 675–703 are a coiled coil; sequence NNNNIVNLNNSYNNKQDKCEQRNKSLNQN.

Belongs to the protein kinase superfamily. Ser/Thr protein kinase family.

It carries out the reaction L-seryl-[protein] + ATP = O-phospho-L-seryl-[protein] + ADP + H(+). The enzyme catalyses L-threonyl-[protein] + ATP = O-phospho-L-threonyl-[protein] + ADP + H(+). In Dictyostelium discoideum (Social amoeba), this protein is Probable serine/threonine-protein kinase DDB_G0279719.